An 838-amino-acid chain; its full sequence is Histidine biosynthesis trifunctional protein (838 aa).

The phosphoribosyl-AMP cyclohydrolase stretch occupies residues 1–271 (MIFPILPVIS…MVEPRTGYGF (271 aa)). The tract at residues 272–360 (CHRETKFTCF…VYFAMVWCIK (89 aa)) is phosphoribosyl-ATP pyrophosphohydrolase. The histidinol dehydrogenase stretch occupies residues 361–838 (HGVRLADIEK…IRMERMAETK (478 aa)). Zn(2+) is bound by residues Gln-660 and His-663. Active-site residues include Glu-729 and His-730. Zn(2+) contacts are provided by Asp-764 and His-823.

In the C-terminal section; belongs to the histidinol dehydrogenase family. Requires Zn(2+) as cofactor.

The enzyme catalyses 1-(5-phospho-beta-D-ribosyl)-5'-AMP + H2O = 1-(5-phospho-beta-D-ribosyl)-5-[(5-phospho-beta-D-ribosylamino)methylideneamino]imidazole-4-carboxamide. The catalysed reaction is 1-(5-phospho-beta-D-ribosyl)-ATP + H2O = 1-(5-phospho-beta-D-ribosyl)-5'-AMP + diphosphate + H(+). It catalyses the reaction L-histidinol + 2 NAD(+) + H2O = L-histidine + 2 NADH + 3 H(+). It functions in the pathway amino-acid biosynthesis; L-histidine biosynthesis; L-histidine from 5-phospho-alpha-D-ribose 1-diphosphate: step 2/9. The protein operates within amino-acid biosynthesis; L-histidine biosynthesis; L-histidine from 5-phospho-alpha-D-ribose 1-diphosphate: step 3/9. It participates in amino-acid biosynthesis; L-histidine biosynthesis; L-histidine from 5-phospho-alpha-D-ribose 1-diphosphate: step 9/9. In Candida albicans (Yeast), this protein is Histidine biosynthesis trifunctional protein (HIS4).